The following is a 162-amino-acid chain: Large ribosomal subunit protein uL15 (162 aa).

A disordered region spans residues 1–41 (MKLSDIADNAGSRKKRMRVGRGIGSGKGKTAGRGGKGQTAR). Residues 21–37 (RGIGSGKGKTAGRGGKG) show a composition bias toward gly residues.

Belongs to the universal ribosomal protein uL15 family. As to quaternary structure, part of the 50S ribosomal subunit.

Functionally, binds to the 23S rRNA. The sequence is that of Large ribosomal subunit protein uL15 from Rhodopseudomonas palustris (strain BisB18).